A 467-amino-acid polypeptide reads, in one-letter code: Ethanolamine-phosphate phospho-lyase homolog 1 (467 aa).

Lys-307 carries the post-translational modification N6-(pyridoxal phosphate)lysine.

Belongs to the class-III pyridoxal-phosphate-dependent aminotransferase family. It depends on pyridoxal 5'-phosphate as a cofactor.

The sequence is that of Ethanolamine-phosphate phospho-lyase homolog 1 from Caenorhabditis elegans.